Consider the following 174-residue polypeptide: Peptide methionine sulfoxide reductase MsrA (174 aa).

Residue cysteine 11 is part of the active site.

The protein belongs to the MsrA Met sulfoxide reductase family.

It catalyses the reaction L-methionyl-[protein] + [thioredoxin]-disulfide + H2O = L-methionyl-(S)-S-oxide-[protein] + [thioredoxin]-dithiol. The enzyme catalyses [thioredoxin]-disulfide + L-methionine + H2O = L-methionine (S)-S-oxide + [thioredoxin]-dithiol. Functionally, has an important function as a repair enzyme for proteins that have been inactivated by oxidation. Catalyzes the reversible oxidation-reduction of methionine sulfoxide in proteins to methionine. In Pasteurella multocida (strain Pm70), this protein is Peptide methionine sulfoxide reductase MsrA.